Reading from the N-terminus, the 734-residue chain is Alpha-catulin (734 aa).

S374 and S538 each carry phosphoserine.

Belongs to the vinculin/alpha-catenin family. Interacts with ARHGEF1. Interacts with DTNA. The interaction is required for correct localization of both CTNL1 and DTNA. As to expression, widely expressed. Expressed at lower level in neural tissues and at the highest level in the adrenal gland.

Its subcellular location is the cytoplasm. It localises to the cytoskeleton. The protein resides in the cell membrane. Its function is as follows. May modulate the Rho pathway signaling by providing a scaffold for the Lbc Rho guanine nucleotide exchange factor (ARHGEF1). This chain is Alpha-catulin (CTNNAL1), found in Homo sapiens (Human).